Consider the following 591-residue polypeptide: Calnexin (591 aa).

The N-terminal stretch at 1–20 (MEGKWLLCLLLVLGTAAVEA) is a signal peptide. Residues 21-482 (HDGHDDDAID…QMLEAAEERP (462 aa)) are Lumenal-facing. 2 residues coordinate Ca(2+): Ser75 and Asp118. Lys138 is modified (N6-acetyllysine). Cys161 and Cys195 form a disulfide bridge. An alpha-D-glucoside-binding residues include Tyr165, Lys167, Tyr186, and Asp193. Residues 261 to 347 (GNLLNDMTPP…EKPEDWDEDM (87 aa)) form a disordered region. Basic and acidic residues predominate over residues 275-320 (REIEDPEDRKPEDWDERPKIADPDAVKPDDWDEDAPSKIPDEEATK). Positions 277-410 (IEDPEDRKPE…RKIPNPDFFE (134 aa)) are p domain (Extended arm). 5 repeat units span residues 279–291 (DPED…WDER), 296–308 (DPDA…WDED), 315–327 (DEEA…WLDD), 334–346 (DPDA…WDED), and 349–359 (GEWEAPQIANP). 2 4 X approximate repeats regions span residues 279–346 (DPED…WDED) and 349–406 (GEWE…IPNP). The segment covering 324–347 (WLDDEPEYIPDPDAEKPEDWDEDM) has biased composition (acidic residues). The tract at residues 327–360 (DEPEYIPDPDAEKPEDWDEDMDGEWEAPQIANPK) is interaction with PPIB. Cys361 and Cys367 are joined by a disulfide. Repeat copies occupy residues 368 to 378 (GVWQRPMIDNP), 382 to 392 (GKWKPPMIDNP), and 396 to 406 (GIWKPRKIPNP). Glu426 provides a ligand contact to an alpha-D-glucoside. Asp437 lines the Ca(2+) pocket. Residues 483–503 (WLWVVYILTVALPVFLVILFC) traverse the membrane as a helical segment. S-palmitoyl cysteine attachment occurs at residues Cys503 and Cys504. The Cytoplasmic portion of the chain corresponds to 504-591 (CSGKKQSNAM…SPRNRKPRRE (88 aa)). Residues 504–591 (CSGKKQSNAM…SPRNRKPRRE (88 aa)) are sufficient to mediate interaction with SGIP1. Basic and acidic residues predominate over residues 514 to 539 (EYKKTDAPQPDVKDEEGKEEEKNKRD). Residues 514 to 591 (EYKKTDAPQP…SPRNRKPRRE (78 aa)) are disordered. Ser553 is modified (phosphoserine). Acidic residues predominate over residues 555–568 (AEEDGVTGSQDEED). Thr561 bears the Phosphothreonine mark. The residue at position 563 (Ser563) is a Phosphoserine; by MAPK3. A Phosphoserine modification is found at Ser582.

This sequence belongs to the calreticulin family. Interacts with MAPK3/ERK1. Interacts with KCNH2. Associates with ribosomes. The palmitoylated form interacts with the ribosome-translocon complex component SSR1, promoting efficient folding of glycoproteins. Interacts with SERPINA2P/SERPINA2 and with the S and Z variants of SERPINA1. Interacts with SGIP1; involved in negative regulation of endocytosis. Interacts with PPIB. Interacts with SMIM22. Interacts with TMX2. Interacts with TMEM35A/NACHO. Interacts with CHRNA7. Interacts with reticulophagy regulators RETREG2 and RETREG3. Interacts with DNM1L; may form part of a larger protein complex at the ER-mitochondrial interface during mitochondrial fission. Interacts with ADAM7. Post-translationally, phosphorylated at Ser-563 by MAPK3/ERK1. Phosphorylation by MAPK3/ERK1 increases its association with ribosomes. Palmitoylation by DHHC6 leads to the preferential localization to the perinuclear rough ER. It mediates the association of calnexin with the ribosome-translocon complex (RTC) which is required for efficient folding of glycosylated proteins. In terms of processing, ubiquitinated, leading to proteasomal degradation. Probably ubiquitinated by ZNRF4. As to expression, expressed in sperm (at protein level).

It localises to the endoplasmic reticulum membrane. The protein localises to the mitochondrion membrane. It is found in the melanosome membrane. Its function is as follows. Calcium-binding protein that interacts with newly synthesized monoglucosylated glycoproteins in the endoplasmic reticulum. It may act in assisting protein assembly and/or in the retention within the ER of unassembled protein subunits. It seems to play a major role in the quality control apparatus of the ER by the retention of incorrectly folded proteins. Associated with partial T-cell antigen receptor complexes that escape the ER of immature thymocytes, it may function as a signaling complex regulating thymocyte maturation. Additionally it may play a role in receptor-mediated endocytosis at the synapse. This chain is Calnexin (Canx), found in Mus musculus (Mouse).